The chain runs to 876 residues: Probable DNA-directed RNA polymerase catalytic subunit (876 aa).

Belongs to the RNA polymerase beta chain family. As to quaternary structure, interacts with LEF-4, LEF-9, and p47.

It catalyses the reaction RNA(n) + a ribonucleoside 5'-triphosphate = RNA(n+1) + diphosphate. In terms of biological role, component of the viral DNA-dependent RNA polymerase which is composed of four equimolar subunits of LEF-4, LEF-8, LEF-9, and p47. Plays an essential role in late and very late gene expression. This chain is Probable DNA-directed RNA polymerase catalytic subunit (LEF-8), found in Autographa californica nuclear polyhedrosis virus (AcMNPV).